The primary structure comprises 134 residues: Retinol-binding protein 2 (134 aa).

Residues lysine 41 and glutamine 109 each contribute to the all-trans-retinol site.

Belongs to the calycin superfamily. Fatty-acid binding protein (FABP) family.

The protein localises to the cytoplasm. Functionally, intracellular transport of retinol. The protein is Retinol-binding protein 2 (Rbp2) of Rattus norvegicus (Rat).